Reading from the N-terminus, the 1104-residue chain is MAVNSKYHHSCINCGGLNTDERNERGLPCEVCLPEDSPSDIYRALLERKTLKEYRFYHEFWNEYEDFRSFFKKKFGKDLTGYQRLWAKRIVQGKSFTMVAPTGVGKTTFGMMTALWLARKGKKSALVFPTVTLVKQTLERLQKLADEKVKIFGFYSSMKKEEKEKFEKSFEEDDYHILVFSTQFVSKNREKLSQKRFDFVFVDDVDAVLKASRNIDTLLMMVGIPEEIIRKAFSTIKQGKIYERPKNLKPGILVVSSATAKPRGIRPLLFRDLLNFTVGRLVSVARNITHVRISSRSKEKLVELLEIFRDGILIFAQTEEEGKELYEYLKRFKFNVGETWSEFEKNFEDFKVGKINILIGVQAYYGKLTRGVDLPERIKYVIFWGTPSMRFSLELDKAPRFVLARVLKEMGLIKAQENPDVEELRKIAKEHLTQKEFVEKVKEMFRGVVVKDEDLELIIPDVYTYIQASGRSSRILNGVLVKGVSVIFEEDEEIFESLKTRLLLIAEEEIIEEAEANWKELVHEVEESRRRSERELTDTSRSLLIIVESPTKAETLSRFLGRASSRKERNIIVHEAVTGEGVILFTATRGHVYDLVTKGGIHGVEEENGKFVPVYNSLKRCRDCGYQFTEDRDECPVCSSKNIDDKTETLRALREISLEADEILVATDPDVEGEKISWDVTQYLLPSTRSLRRIEMHEITRYGFKKARESVRFVDFNLVKAQIVRRVQDRWIGFELSGKLQKRFGRSNLSAGRVQSTVLGWIVEREEEYKKSEKDFTLLVLENGVNLEVEGKIADDVVTVVELQEAEEEKNPLPPYTTSSALSEISQKLRLGVQEVMDILQDLFEKGFITYHRTDSTRISLEGQNVARTYLRKIGKEDIFMGRSWSTEGAHEAIRPVKPIDARELEEMIEEGLIADLTKKHLRVYELIFNRFLASQSAAVKVKKQIVTVDVDGKRMGIEQIVEILRDGWNLFVPLTVSPRFEHRTYKIKEKKFYKKHTVPLFTQASIVEEMKKRGIGRPSTYAKIVEVLFRRGYVYEDKYKRVRPTRFGVMVYSYLKERYEKYVTEETTRRLEEIMDKVERGEEDYQATLRLLYEEIKSLMEEG.

The RG N-terminal-type zinc-finger motif lies at 1-39 (MAVNSKYHHSCINCGGLNTDERNERGLPCEVCLPEDSPS). Positions 11, 14, 29, and 32 each coordinate Zn(2+). ADP is bound by residues phenylalanine 75, aspartate 78, glutamine 83, glycine 103, glycine 105, lysine 106, threonine 107, and threonine 108. ATP-binding positions include glutamine 83 and 100-107 (APTGVGKT). Residues 87–242 (AKRIVQGKSF…FSTIKQGKIY (156 aa)) form the Helicase ATP-binding domain. Positions 203–206 (DDVD) match the DEAD box motif. An insert region region spans residues 223–250 (GIPEEIIRKAFSTIKQGKIYERPKNLKP). The region spanning 300–522 (KLVELLEIFR…EAEANWKELV (223 aa)) is the Helicase C-terminal domain. The interval 390-460 (RFSLELDKAP…KDEDLELIIP (71 aa)) is latch region. The topoisomerase I stretch occupies residues 538–1104 (DTSRSLLIIV…EEIKSLMEEG (567 aa)). The region spanning 542-699 (SLLIIVESPT…SLRRIEMHEI (158 aa)) is the Toprim domain. Position 548 (glutamate 548) interacts with Mg(2+). An RG C-terminal-type zinc finger spans residues 618–645 (LKRCRDCGYQFTEDRDECPVCSSKNIDD). Residues cysteine 621, cysteine 624, cysteine 635, and cysteine 638 each coordinate Zn(2+). Aspartate 668 serves as a coordination point for Mg(2+). A Topo IA-type catalytic domain is found at 715-1101 (DFNLVKAQIV…LLYEEIKSLM (387 aa)). The active-site O-(5'-phospho-DNA)-tyrosine intermediate is tyrosine 851.

The protein in the N-terminal section; belongs to the DEAD box helicase family. DDVD subfamily. This sequence in the C-terminal section; belongs to the type IA topoisomerase family. Monomer. Requires Zn(2+) as cofactor. It depends on Mg(2+) as a cofactor.

It is found in the cytoplasm. The enzyme catalyses ATP + H2O = ADP + phosphate + H(+). Its function is as follows. Modifies the topological state of DNA by introducing positive supercoils in an ATP-dependent process. Increases the linking number in steps of +1. Probably recognizes regions with a low GC content which melt and form a ssDNA bubble, allowing the enzyme to bind and cleave the DNA prior to strand passage; the bubble is probably cleaved by 2 reverse gyrase molecules, one on each strand. Positively supercoils DNA with all NTPS, although it strongly prefers ATP. In the presence of non-hydrolyzable ATP analogs it partially relaxes negative supercoils. Has an intrinsic ATPase activity that is stimulated by DNA; ssDNA is most effective. Binds to single-stranded DNA, transiently cleaves and then rejoins the ends, introducing a positive supercoil in the process. The scissile phosphodiester is attacked by the catalytic tyrosine of the enzyme, resulting in the formation of a DNA-(5'-phosphotyrosyl)-enzyme intermediate. The helicase-like domain is a nucleotide-dependent switch that alternates between a physically closed ATP-bound state with a slight preference for dsDNA, and an open ADP-bound state with a high preference for ssDNA. Whole enzyme has a very poor (k-unwind=0.001 sec(-1)) non-processive helicase activity in the 3'-5' direction that works on short substrates, while the isolated helicase domain has a slightly better helicase activity that works in both directions. Probably involved in rewinding DNA strands in regions of the chromosome that have opened up to allow replication, transcription, DNA repair and/or for DNA protection. In Thermotoga maritima (strain ATCC 43589 / DSM 3109 / JCM 10099 / NBRC 100826 / MSB8), this protein is Reverse gyrase.